The sequence spans 207 residues: MNLKLLCAVSWNKDNKCADTDEWLKAIVEDGGYFYRNNRTHQNIDSRSRKWVGLPLENFIGKLVDERNELKGLLKDVNALERSHAKALQNILKLFINTTYGVLGSPYFVVSNTVLANNRTAKAPMGAWMINKALHTRQSITDGGGGLTTIPYLKSEANNPGLGILSDISKWYNSKRGHYQTSLSNIDWKKQYLKSMICQVKRQKYNS.

The protein resides in the mitochondrion. This is an uncharacterized protein from Marchantia polymorpha (Common liverwort).